A 276-amino-acid polypeptide reads, in one-letter code: MLIDFRQVCGAGAAALALASPALADTTNLRVCASTKDAPFSDAQGAGFENKIAQVLADEMGATLDLVMLEKDAIYLVRDGIEKDLCDVLVGVDAGDERLLTTRPYYRSGYAFVTRQDRNFEGDKWQDVDQEGFDTFSYRLHSPAETILKYTGRYEYNLIYQASLTNFEDRRNKYTQVEASRVITEVADGGADLAIVFAPEAARYVRDSREPLRMTLITNEIERSDGVIIPLQYSQSVGVSKTHPELLGPIEQALQSGKARIDAILTEEGIPLLPSS.

Positions Met-1 to Ala-24 are cleaved as a signal peptide.

The protein resides in the periplasm. Functionally, may be involved in the assemblage of active methanol dehydrogenase and/or its cofactor PQQ in the periplasm. The sequence is that of Protein MoxJ (moxJ) from Paracoccus denitrificans.